The sequence spans 166 residues: Large ribosomal subunit protein bL9 (166 aa).

It belongs to the bacterial ribosomal protein bL9 family.

Functionally, binds to the 23S rRNA. This chain is Large ribosomal subunit protein bL9, found in Brachyspira hyodysenteriae (strain ATCC 49526 / WA1).